We begin with the raw amino-acid sequence, 177 residues long: Large ribosomal subunit protein uL5 (177 aa).

The protein belongs to the universal ribosomal protein uL5 family. Part of the 50S ribosomal subunit; part of the 5S rRNA/L5/L18/L25 subcomplex. Contacts the 5S rRNA and the P site tRNA. Forms a bridge to the 30S subunit in the 70S ribosome.

Its function is as follows. This is one of the proteins that bind and probably mediate the attachment of the 5S RNA into the large ribosomal subunit, where it forms part of the central protuberance. In the 70S ribosome it contacts protein S13 of the 30S subunit (bridge B1b), connecting the 2 subunits; this bridge is implicated in subunit movement. Contacts the P site tRNA; the 5S rRNA and some of its associated proteins might help stabilize positioning of ribosome-bound tRNAs. The polypeptide is Large ribosomal subunit protein uL5 (Neorickettsia sennetsu (strain ATCC VR-367 / Miyayama) (Ehrlichia sennetsu)).